A 270-amino-acid chain; its full sequence is Structure-specific endonuclease subunit SLX1 (270 aa).

In terms of domain architecture, GIY-YIG spans 9–94 (RFFGVYLLYC…PQASRRLTHV (86 aa)). An SLX1-type zinc finger spans residues 182 to 234 (CSLCARLLQDEEGPLCCPHPGCPLRAHIICLAEEFLQEEPGQLLPLEGHCPSC).

Belongs to the SLX1 family. In terms of assembly, forms a heterodimer with SLX4. Requires a divalent metal cation as cofactor. Expressed in testis, colon, bone marrow, brain, thymus and to a lesser extent in heart, kidney, skeletal muscle and spleen.

It localises to the nucleus. In terms of biological role, catalytic subunit of the SLX1-SLX4 structure-specific endonuclease that resolves DNA secondary structures generated during DNA repair and recombination. Has endonuclease activity towards branched DNA substrates, introducing single-strand cuts in duplex DNA close to junctions with ss-DNA. Has a preference for 5'-flap structures, and promotes symmetrical cleavage of static and migrating Holliday junctions (HJs). Resolves HJs by generating two pairs of ligatable, nicked duplex products. The protein is Structure-specific endonuclease subunit SLX1 (Slx1b) of Mus musculus (Mouse).